We begin with the raw amino-acid sequence, 325 residues long: N-acetyl-gamma-glutamyl-phosphate reductase (325 aa).

Residue Cys135 is part of the active site.

This sequence belongs to the NAGSA dehydrogenase family. Type 1 subfamily.

Its subcellular location is the cytoplasm. The enzyme catalyses N-acetyl-L-glutamate 5-semialdehyde + phosphate + NADP(+) = N-acetyl-L-glutamyl 5-phosphate + NADPH + H(+). Its pathway is amino-acid biosynthesis; L-arginine biosynthesis; N(2)-acetyl-L-ornithine from L-glutamate: step 3/4. Functionally, catalyzes the NADPH-dependent reduction of N-acetyl-5-glutamyl phosphate to yield N-acetyl-L-glutamate 5-semialdehyde. The protein is N-acetyl-gamma-glutamyl-phosphate reductase of Flavobacterium johnsoniae (strain ATCC 17061 / DSM 2064 / JCM 8514 / BCRC 14874 / CCUG 350202 / NBRC 14942 / NCIMB 11054 / UW101) (Cytophaga johnsonae).